The primary structure comprises 156 residues: Small ribosomal subunit protein uS7 (156 aa).

This sequence belongs to the universal ribosomal protein uS7 family. As to quaternary structure, part of the 30S ribosomal subunit. Contacts proteins S9 and S11.

One of the primary rRNA binding proteins, it binds directly to 16S rRNA where it nucleates assembly of the head domain of the 30S subunit. Is located at the subunit interface close to the decoding center, probably blocks exit of the E-site tRNA. The chain is Small ribosomal subunit protein uS7 from Bacillus velezensis (strain DSM 23117 / BGSC 10A6 / LMG 26770 / FZB42) (Bacillus amyloliquefaciens subsp. plantarum).